The sequence spans 147 residues: Hemoglobin subunit beta-3 (147 aa).

One can recognise a Globin domain in the interval E2–H147. H63 and H92 together coordinate heme b.

The protein belongs to the globin family. As to quaternary structure, heterotetramer of two alpha chains and two beta chains. Red blood cells.

Functionally, involved in oxygen transport from gills to the various peripheral tissues. In Muraena helena (Mediterranean moray), this protein is Hemoglobin subunit beta-3 (hbb3).